The primary structure comprises 360 residues: Pyrimidine monooxygenase RutA (360 aa).

FMN is bound by residues 49–50 (IK), asparagine 115, glutamate 124, 140–141 (RY), and serine 190.

Belongs to the NtaA/SnaA/DszA monooxygenase family. RutA subfamily.

It catalyses the reaction uracil + FMNH2 + NADH + O2 = (Z)-3-ureidoacrylate + FMN + NAD(+) + H2O + H(+). The catalysed reaction is thymine + FMNH2 + NADH + O2 = (Z)-2-methylureidoacrylate + FMN + NAD(+) + H2O + H(+). Functionally, catalyzes the pyrimidine ring opening between N-3 and C-4 by an unusual flavin hydroperoxide-catalyzed mechanism, adding oxygen atoms in the process to yield ureidoacrylate peracid, that immediately reacts with FMN forming ureidoacrylate and FMN-N(5)-oxide. The FMN-N(5)-oxide reacts spontaneously with NADH to produce FMN. Requires the flavin reductase RutF to regenerate FMN in vivo. This chain is Pyrimidine monooxygenase RutA, found in Stutzerimonas stutzeri (strain A1501) (Pseudomonas stutzeri).